Here is a 315-residue protein sequence, read N- to C-terminus: Putative olfactory receptor 2I1 (315 aa).

The Extracellular portion of the chain corresponds to 1–24; sequence MKANYSAEERFLLLGFSDWPSLQP. The chain crosses the membrane as a helical span at residues 25–48; it reads VLFALVLLCYLLTLTGNSALVLLA. The Cytoplasmic portion of the chain corresponds to 49–56; it reads VRDPRLHT. The chain crosses the membrane as a helical span at residues 57–78; it reads PMYYFLCHLALVDAGFTTSVVP. Over 79–99 the chain is Extracellular; it reads PLLANLRGPALWLPRSHCTAQ. A disulfide bridge connects residues C96 and C188. The helical transmembrane segment at 100-119 threads the bilayer; sequence LCASLALGSAECVLLAVMAL. Residues 120-138 are Cytoplasmic-facing; the sequence is DRAAAVCRPLRYAGLVSPR. The helical transmembrane segment at 139–157 threads the bilayer; it reads LCRTLASASWLSGLTNSVA. Topologically, residues 158–195 are extracellular; that stretch reads QTALLAERPLCAPRLLDHFICELPALLKLACGGDGDTT. A helical transmembrane segment spans residues 196-219; sequence ENQMFAARVVILLLPFAVILASYG. Topologically, residues 220–236 are cytoplasmic; the sequence is AVARAVCCMRFSGGRRR. Residues 237–259 traverse the membrane as a helical segment; that stretch reads AVGTCGSHLTAVCLFYGSAIYTY. Residues 260 to 272 lie on the Extracellular side of the membrane; sequence LQPAQRYNQARGK. The chain crosses the membrane as a helical span at residues 273-292; sequence FVSLFYTVVTPALNPLIYTL. The Cytoplasmic segment spans residues 293 to 315; it reads RNKKVKGAARRLLRSLGRGQAGQ.

The protein belongs to the G-protein coupled receptor 1 family.

Its subcellular location is the cell membrane. Odorant receptor. The polypeptide is Putative olfactory receptor 2I1 (Homo sapiens (Human)).